The chain runs to 439 residues: COBRA-like protein 7 (439 aa).

The N-terminal stretch at 1–22 is a signal peptide; sequence MDVDQLILFVFVCCLSSRFADA. N138, N181, N186, N232, N312, and N346 each carry an N-linked (GlcNAc...) asparagine glycan. A lipid anchor (GPI-anchor amidated asparagine) is attached at N412. Positions 413–439 are cleaved as a propeptide — removed in mature form; that stretch reads GGPDSRVSAAQLIASSCLLLPFIFLIM.

It belongs to the COBRA family.

The protein localises to the cell membrane. Involved in determining the orientation of cell expansion, probably by playing an important role in cellulose deposition. May act by recruiting cellulose synthesizing complexes to discrete positions on the cell surface. In Oryza sativa subsp. japonica (Rice), this protein is COBRA-like protein 7 (BC1LP1).